The sequence spans 2390 residues: Spectrin beta chain, non-erythrocytic 2 (2390 aa).

N-acetylserine is present on S2. The actin-binding stretch occupies residues 2–278 (SSTLSPTDFD…IITYVATYYH (277 aa)). Phosphoserine is present on residues S6 and S31. Calponin-homology (CH) domains follow at residues 57–161 (AVQK…LRFQ) and 176–281 (KSAK…HYFS). Spectrin repeat units follow at residues 306–414 (LVEK…LALR), 427–527 (AARF…RERL), 532–639 (ELQK…RLEE), 642–744 (RLWR…QRLA), 749–849 (LYQF…RALE), and 855–954 (YTML…KAAL). Residue S959 is modified to Phosphoserine. 11 Spectrin repeats span residues 960–1063 (IQNY…SLGE), 1066–1169 (RLQD…GRLA), 1174–1262 (FQGF…RHKK), 1279–1379 (EQQH…ARSL), 1384–1485 (RAEL…RRLQ), 1489–1586 (EQHQ…RLED), 1589–1692 (RAQQ…RLQE), 1696–1797 (LCQL…GQVL), 1801–1904 (YELQ…QLLL), 1910–2010 (FRFF…DWLQ), and 2017–2076 (VFGR…EKLT). Phosphoserine is present on S1073. Residues 2081–2096 (REKERKRKREEEERRK) are compositionally biased toward basic and acidic residues. Disordered stretches follow at residues 2081 to 2222 (REKE…EQME) and 2331 to 2390 (SSAS…KKNK). Polar residues predominate over residues 2116–2125 (QTASDTTWDG). Phosphoserine occurs at positions 2171 and 2199. The region spanning 2218 to 2328 (QEQMEGMLCR…WLRVVNAAIA (111 aa)) is the PH domain. The residue at position 2354 (T2354) is a Phosphothreonine. Residue S2359 is modified to Phosphoserine. Over residues 2370 to 2383 (RSKDGREREREKRF) the composition is skewed to basic and acidic residues.

Belongs to the spectrin family. As to expression, highly expressed in brain, kidney, pancreas, and liver, and at lower levels in lung and placenta.

The protein localises to the cytoplasm. It localises to the cytoskeleton. It is found in the cell cortex. Its function is as follows. Probably plays an important role in neuronal membrane skeleton. The sequence is that of Spectrin beta chain, non-erythrocytic 2 (SPTBN2) from Homo sapiens (Human).